Here is a 509-residue protein sequence, read N- to C-terminus: Sensor histidine kinase TrcS (509 aa).

2 helical membrane passes run 24-44 (LLLG…VVSV) and 188-208 (VALV…VVGY). An HAMP domain is found at 207–269 (GYALRPLRRV…LLDNVDGALA (63 aa)). A Histidine kinase domain is found at 284–502 (DASHELRTPL…VFRVRLPMIE (219 aa)). Position 287 is a phosphohistidine; by autocatalysis (H287).

It depends on a divalent metal cation as a cofactor. Post-translationally, autophosphorylated.

It is found in the cell membrane. The enzyme catalyses ATP + protein L-histidine = ADP + protein N-phospho-L-histidine.. Its function is as follows. Member of the two-component regulatory system TrcS/TrcR. Phosphorylates TrcR. The TrcR-TrcS regulatory system may act as a transition regulatory system involved in adapting to an intracellular environment and transitioning from latency to reactivation. This Mycobacterium tuberculosis (strain ATCC 25618 / H37Rv) protein is Sensor histidine kinase TrcS.